Here is a 220-residue protein sequence, read N- to C-terminus: Deoxyribose-phosphate aldolase (220 aa).

Aspartate 89 serves as the catalytic Proton donor/acceptor. Catalysis depends on lysine 151, which acts as the Schiff-base intermediate with acetaldehyde. Lysine 180 acts as the Proton donor/acceptor in catalysis.

Belongs to the DeoC/FbaB aldolase family. DeoC type 1 subfamily.

It localises to the cytoplasm. It catalyses the reaction 2-deoxy-D-ribose 5-phosphate = D-glyceraldehyde 3-phosphate + acetaldehyde. It participates in carbohydrate degradation; 2-deoxy-D-ribose 1-phosphate degradation; D-glyceraldehyde 3-phosphate and acetaldehyde from 2-deoxy-alpha-D-ribose 1-phosphate: step 2/2. Functionally, catalyzes a reversible aldol reaction between acetaldehyde and D-glyceraldehyde 3-phosphate to generate 2-deoxy-D-ribose 5-phosphate. The chain is Deoxyribose-phosphate aldolase from Streptococcus pneumoniae serotype 19F (strain G54).